We begin with the raw amino-acid sequence, 478 residues long: Septin-4 (478 aa).

Disordered regions lie at residues 40–74 (DFSG…LYDD) and 87–115 (ADNQ…LDPY). Residues 95 to 108 (APAPLSPSARPRSP) show a composition bias toward low complexity. Residues serine 117 and serine 118 each carry the phosphoserine modification. The 274-residue stretch at 141–414 (KGFDFTLMVA…ENYRAQCIQS (274 aa)) folds into the Septin-type G domain. The G1 motif stretch occupies residues 151 to 158 (GESGLGKS). GTP-binding positions include 151 to 158 (GESGLGKS) and threonine 185. The segment at 208–211 (DTPG) is G3 motif. The G4 motif stretch occupies residues 289–292 (AKAD). Residue 290-298 (KADTLTPPE) coordinates GTP. Position 325 is a phosphoserine (serine 325). 2 residues coordinate GTP: glycine 348 and arginine 363. The segment at 428–448 (LTRESGTDFPIPAVPPGTDPE) is disordered. Serine 432 is modified (phosphoserine). A Phosphothreonine modification is found at threonine 434. Positions 446 to 478 (DPETEKLIREKDEELRRMQEILHKIQKQMKETY) form a coiled coil.

Belongs to the TRAFAC class TrmE-Era-EngA-EngB-Septin-like GTPase superfamily. Septin GTPase family. As to quaternary structure, septins polymerize into heterooligomeric protein complexes that form filaments, and can associate with cellular membranes, actin filaments and microtubules. GTPase activity is required for filament formation. Interacts with SEPTIN8. Component of a septin core octameric complex consisting of SEPTIN12, SEPTIN7, SEPTIN6 and SEPTIN2 or SEPTIN4 in the order 12-7-6-2-2-6-7-12 or 12-7-6-4-4-6-7-12. Interacts with SEPTIN14 (via C-terminus). Interacts with DYRK1A. Interacts with SLC6A3/DAT and SNCA/alpha-synuclein. Interacts with STX1A; in the striatum. Interacts with XIAP (via BIR3 domain) following the induction of apoptosis. Interacts with AREL1 (via HECT domain); in the cytoplasm following induction of apoptosis. Post-translationally, ubiquitinated by AREL1. Phosphorylated by DYRK1A.

It localises to the cytoplasm. The protein localises to the cell projection. The protein resides in the cilium. Its subcellular location is the flagellum. It is found in the cytoplasmic vesicle. It localises to the secretory vesicle. The protein localises to the axon. The protein resides in the dendrite. Its subcellular location is the perikaryon. It is found in the synapse. Functionally, filament-forming cytoskeletal GTPase. Pro-apoptotic protein involved in LGR5-positive intestinal stem cell and Paneth cell expansion in the intestines, via its interaction with XIAP. May also play a role in the regulation of cell fate in the intestine. Positive regulator of apoptosis involved in hematopoietic stem cell homeostasis; via its interaction with XIAP. Negative regulator of repair and hair follicle regeneration in response to injury, due to inhibition of hair follicle stem cell proliferation, potentially via its interaction with XIAP. Plays an important role in male fertility and sperm motility. During spermiogenesis, essential for the establishment of the annulus (a fibrous ring structure connecting the midpiece and the principal piece of the sperm flagellum) which is a requisite for the structural and mechanical integrity of the sperm. Involved in the migration of cortical neurons and the formation of neuron leading processes during embryonic development. Required for dopaminergic metabolism in presynaptic autoreceptors; potentially via activity as a presynaptic scaffold protein. The chain is Septin-4 from Macaca fascicularis (Crab-eating macaque).